A 256-amino-acid polypeptide reads, in one-letter code: Probable hydroxyacylglutathione hydrolase SPCC13B11.03c (256 aa).

His-63, His-65, Asp-67, His-68, His-118, and Asp-139 together coordinate Zn(2+). Substrate is bound by residues 148–150, 178–180, and 250–253; these read RFF, HEY, and RTLK. Residue His-178 participates in Zn(2+) binding.

It belongs to the metallo-beta-lactamase superfamily. Glyoxalase II family. Requires Zn(2+) as cofactor.

The protein resides in the cytoplasm. Its subcellular location is the nucleus. The catalysed reaction is an S-(2-hydroxyacyl)glutathione + H2O = a 2-hydroxy carboxylate + glutathione + H(+). The enzyme catalyses (R)-S-lactoylglutathione + H2O = (R)-lactate + glutathione + H(+). Its pathway is secondary metabolite metabolism; methylglyoxal degradation; (R)-lactate from methylglyoxal: step 2/2. In terms of biological role, thiolesterase that catalyzes the hydrolysis of S-D-lactoylglutathione to form glutathione and D-lactic acid. Involved in the metabolism of methylglyoxal, a toxic compound for yeast proliferation, by converting methylglyoxal to lactate via S-D-lactoylglutathione by sequential enzyme reactions catalyzed by glyoxalase I and glyoxalase II. The chain is Probable hydroxyacylglutathione hydrolase SPCC13B11.03c from Schizosaccharomyces pombe (strain 972 / ATCC 24843) (Fission yeast).